We begin with the raw amino-acid sequence, 671 residues long: DNA ligase (671 aa).

NAD(+) is bound by residues 34 to 38 (DAEYD), 83 to 84 (SL), and Glu117. The active-site N6-AMP-lysine intermediate is Lys119. Residues Arg140, Glu177, Lys293, and Lys317 each coordinate NAD(+). Positions 411, 414, 429, and 434 each coordinate Zn(2+). The 81-residue stretch at 591–671 (KVGGKFTGKT…EFLQMLEGEQ (81 aa)) folds into the BRCT domain.

Belongs to the NAD-dependent DNA ligase family. LigA subfamily. Mg(2+) serves as cofactor. The cofactor is Mn(2+).

It carries out the reaction NAD(+) + (deoxyribonucleotide)n-3'-hydroxyl + 5'-phospho-(deoxyribonucleotide)m = (deoxyribonucleotide)n+m + AMP + beta-nicotinamide D-nucleotide.. Its function is as follows. DNA ligase that catalyzes the formation of phosphodiester linkages between 5'-phosphoryl and 3'-hydroxyl groups in double-stranded DNA using NAD as a coenzyme and as the energy source for the reaction. It is essential for DNA replication and repair of damaged DNA. This is DNA ligase from Geobacter metallireducens (strain ATCC 53774 / DSM 7210 / GS-15).